A 98-amino-acid chain; its full sequence is UPF0390 protein zgc136864 (98 aa).

The span at 1–30 (MAQGKQKFKAQRPGGAKKHQNKPKGLKKGG) shows a compositional bias: basic residues. Disordered stretches follow at residues 1–38 (MAQG…PKKA) and 63–98 (TQKA…GPSK). The segment covering 83 to 98 (KSGTAGAPKPAAGPSK) has biased composition (low complexity).

Belongs to the UPF0390 family.

The chain is UPF0390 protein zgc136864 from Danio rerio (Zebrafish).